The sequence spans 266 residues: 3-methyl-2-oxobutanoate hydroxymethyltransferase 2 (266 aa).

Positions 45 and 84 each coordinate Mg(2+). Residues 45 to 46, Asp-84, and Lys-112 each bind 3-methyl-2-oxobutanoate; that span reads DS. Glu-114 provides a ligand contact to Mg(2+). The active-site Proton acceptor is the Glu-181.

This sequence belongs to the PanB family. In terms of assembly, homodecamer; pentamer of dimers. Mg(2+) serves as cofactor.

Its subcellular location is the cytoplasm. The enzyme catalyses 3-methyl-2-oxobutanoate + (6R)-5,10-methylene-5,6,7,8-tetrahydrofolate + H2O = 2-dehydropantoate + (6S)-5,6,7,8-tetrahydrofolate. Its pathway is cofactor biosynthesis; (R)-pantothenate biosynthesis; (R)-pantoate from 3-methyl-2-oxobutanoate: step 1/2. Functionally, catalyzes the reversible reaction in which hydroxymethyl group from 5,10-methylenetetrahydrofolate is transferred onto alpha-ketoisovalerate to form ketopantoate. The sequence is that of 3-methyl-2-oxobutanoate hydroxymethyltransferase 2 from Pseudomonas entomophila (strain L48).